The following is a 410-amino-acid chain: Exopolygalacturonase (410 aa).

A signal peptide spans 1 to 22; that stretch reads MACIDNAMRALFLLALFCVVHG. N-linked (GlcNAc...) asparagine glycans are attached at residues asparagine 89 and asparagine 201. PbH1 repeat units follow at residues 192–218, 219–240, 242–262, 272–293, and 337–377; these read CKDM…HMGD, SSGV…SIGP, TSKV…SIGS, VTDI…RIKA, and ASKV…TMDD. Aspartate 233 functions as the Proton donor in the catalytic mechanism. Cysteine 235 and cysteine 252 are disulfide-bonded. A glycan (N-linked (GlcNAc...) asparagine) is linked at asparagine 246. The active site involves histidine 256. N-linked (GlcNAc...) asparagine glycosylation is present at asparagine 349. Cysteine 364 and cysteine 370 form a disulfide bridge. Asparagine 387 carries an N-linked (GlcNAc...) asparagine glycan. A disulfide bridge connects residues cysteine 393 and cysteine 409.

The protein belongs to the glycosyl hydrolase 28 family. As to expression, pollen.

The protein localises to the secreted. It is found in the cell wall. It catalyses the reaction [(1-&gt;4)-alpha-D-galacturonosyl](n) + H2O = alpha-D-galacturonate + [(1-&gt;4)-alpha-D-galacturonosyl](n-1). In terms of biological role, may function in depolymerizing pectin during pollen development, germination, and tube growth. Acts as an exo-polygalacturonase. The chain is Exopolygalacturonase (PG2C) from Zea mays (Maize).